Consider the following 235-residue polypeptide: Large ribosomal subunit protein uL1 (235 aa).

The protein belongs to the universal ribosomal protein uL1 family. In terms of assembly, part of the 50S ribosomal subunit.

In terms of biological role, binds directly to 23S rRNA. The L1 stalk is quite mobile in the ribosome, and is involved in E site tRNA release. Functionally, protein L1 is also a translational repressor protein, it controls the translation of the L11 operon by binding to its mRNA. In Arthrobacter sp. (strain FB24), this protein is Large ribosomal subunit protein uL1.